A 309-amino-acid polypeptide reads, in one-letter code: tRNA pseudouridine synthase B (309 aa).

The Nucleophile role is filled by Asp51.

It belongs to the pseudouridine synthase TruB family. Type 1 subfamily.

The catalysed reaction is uridine(55) in tRNA = pseudouridine(55) in tRNA. Responsible for synthesis of pseudouridine from uracil-55 in the psi GC loop of transfer RNAs. This Coxiella burnetii (strain RSA 331 / Henzerling II) protein is tRNA pseudouridine synthase B.